The chain runs to 1053 residues: SPX and EXS domain-containing protein 2 (1053 aa).

One can recognise an SPX domain in the interval 1–339 (MKFRDYLKDN…PRIAKECRKY (339 aa)). The span at 54-88 (NNINKNNNNNNNNNNNNNNNNNNNNNINNNNNNNN) shows a compositional bias: low complexity. Positions 54–137 (NNINKNNNNN…VGDEDGGDDD (84 aa)) are disordered. Over residues 95–112 (QTNSNNISIPNQMAPQES) the composition is skewed to polar residues. The segment covering 113–122 (SGEDEDDENE) has biased composition (acidic residues). 10 helical membrane-spanning segments follow: residues 391–411 (YIIG…IFKF), 427–447 (MAWL…LFAL), 476–496 (YLMY…VYVD), 510–530 (YLLL…ILPF), 561–581 (FFMS…QQIV), 595–615 (GVCF…PFYW), 630–652 (FFPH…LLWV), 666–686 (ILWF…DFTV), 712–732 (WVYY…LIVF), and 745–765 (PLFL…FIFF). Residues 596–798 (VCFKHKAVIF…SQDYKNYMEE (203 aa)) form the EXS domain. Disordered regions lie at residues 799–871 (KKSR…VDDE) and 1023–1053 (HPEL…NKSR). Residues 842–853 (DDDDDDESIDSD) are compositionally biased toward acidic residues. Over residues 1023-1040 (HPELNSSNRNQVDPNSPM) the composition is skewed to polar residues.

It belongs to the SYG1 (TC 2.A.94) family.

It localises to the membrane. The polypeptide is SPX and EXS domain-containing protein 2 (Dictyostelium discoideum (Social amoeba)).